A 1175-amino-acid polypeptide reads, in one-letter code: 1-phosphatidylinositol 4,5-bisphosphate phosphodiesterase beta-4 (1175 aa).

An N-acetylalanine modification is found at alanine 2. Residues 313 to 463 enclose the PI-PLC X-box domain; sequence QEMDHPLAHY…LKRKILIKNK (151 aa). Catalysis depends on residues histidine 328 and histidine 375. Positions 482–511 are disordered; that stretch reads EAGESASPANILEDDNEEEIESADQEEEAH. A compositionally biased stretch (acidic residues) spans 493–508; that stretch reads LEDDNEEEIESADQEE. Residues 565 to 681 form the PI-PLC Y-box domain; the sequence is LSTMINYAQP…GYLLKPDFMR (117 aa). The region spanning 684-809 is the C2 domain; sequence DRTFDPFSET…SLRNEGNKPL (126 aa). 2 disordered regions span residues 863–895 and 1082–1110; these read ADVPSDTSKNDKKGKANTAKANVTPQSSSELRP and KISMENSKAISQDKSIKNKAERERRVREL. Composition is skewed to polar residues over residues 881-895 and 1085-1094; these read AKANVTPQSSSELRP and MENSKAISQD. The residue at position 886 (threonine 886) is a Phosphothreonine. Residues 1095–1109 show a composition bias toward basic and acidic residues; the sequence is KSIKNKAERERRVRE.

Ca(2+) serves as cofactor. In terms of tissue distribution, preferentially expressed in the retina.

It is found in the cell membrane. The catalysed reaction is a 1,2-diacyl-sn-glycero-3-phospho-(1D-myo-inositol-4,5-bisphosphate) + H2O = 1D-myo-inositol 1,4,5-trisphosphate + a 1,2-diacyl-sn-glycerol + H(+). It catalyses the reaction a 1,2-diacyl-sn-glycero-3-phospho-(1D-myo-inositol) + H2O = 1D-myo-inositol 1-phosphate + a 1,2-diacyl-sn-glycerol + H(+). Activated phosphatidylinositol-specific phospholipase C enzymes catalyze the production of the second messenger molecules diacylglycerol (DAG) and inositol 1,4,5-trisphosphate (IP3) involved in G-protein coupled receptor signaling pathways. PLCB4 is a direct effector of the endothelin receptor signaling pathway that plays an essential role in lower jaw and middle ear structures development. The protein is 1-phosphatidylinositol 4,5-bisphosphate phosphodiesterase beta-4 of Homo sapiens (Human).